Consider the following 563-residue polypeptide: DNA polymerase III subunit tau (563 aa).

45-52 contributes to the ATP binding site; the sequence is GPRGTGKT. Zn(2+) contacts are provided by C64, C73, C76, and C79.

This sequence belongs to the DnaX/STICHEL family. As to quaternary structure, component of the DNA clamp loading complex consisting of tau(3):delta(1):delta'(1). The DNA polymerase III holoenzyme complex contains at least 10 different subunits organized into 3 functionally essential subassemblies: the Pol III core, the beta sliding clamp processivity factor and the clamp-loading complex. The Pol III core (subunits alpha, epsilon and theta) contains the polymerase and the 3'-5' exonuclease proofreading activities. The polymerase is tethered to the template via the dimeric beta sliding clamp processivity factor. The DNA clamp-loading complex assembles the beta sliding clamp onto the primed template and plays a central role in the organization and communication at the replication fork. Forms a complex with replicative DNA helicase DnaB (shown with G.stearothermophilus DnaB) tau(3):DnaB(6); a single ATP hydrolysis even is sufficient for complex formation. Colocalizes with DNA helicases PriA, RecQ and RecS.

The protein localises to the cytoplasm. It is found in the nucleoid. It carries out the reaction DNA(n) + a 2'-deoxyribonucleoside 5'-triphosphate = DNA(n+1) + diphosphate. Part of the beta sliding clamp loading complex, which hydrolyzes ATP to load the beta clamp onto primed DNA to form the DNA replication pre-initiation complex. DNA polymerase III is a complex, multichain enzyme responsible for most of the replicative DNA synthesis in bacteria. This is DNA polymerase III subunit tau from Bacillus subtilis (strain 168).